Reading from the N-terminus, the 549-residue chain is Glucose-6-phosphate isomerase (549 aa).

3 positions are modified to N6-acetyllysine: K80, K228, and K234. E355 serves as the catalytic Proton donor. Catalysis depends on residues H386 and K514.

The protein belongs to the GPI family.

It localises to the cytoplasm. The enzyme catalyses alpha-D-glucose 6-phosphate = beta-D-fructose 6-phosphate. It functions in the pathway carbohydrate biosynthesis; gluconeogenesis. The protein operates within carbohydrate degradation; glycolysis; D-glyceraldehyde 3-phosphate and glycerone phosphate from D-glucose: step 2/4. In terms of biological role, catalyzes the reversible isomerization of glucose-6-phosphate to fructose-6-phosphate. This Shigella flexneri protein is Glucose-6-phosphate isomerase.